The chain runs to 598 residues: DNA polymerase alpha subunit B (598 aa).

Positions 112–140 (SYTTPSKGSQKRAISTPETPLTKRSVSTR) are enriched in polar residues. Residues 112–167 (SYTTPSKGSQKRAISTPETPLTKRSVSTRSPHQLLSPSSFSPSATPSQKYNSRSNR) form a disordered region. A Phosphoserine modification is found at serine 126. 2 positions are modified to phosphothreonine: threonine 127 and threonine 130. A phosphoserine mark is found at serine 141, serine 147, serine 152, and serine 154. Over residues 141 to 158 (SPHQLLSPSSFSPSATPS) the composition is skewed to low complexity.

This sequence belongs to the DNA polymerase alpha subunit B family. In terms of assembly, component of the alpha DNA polymerase complex (also known as the alpha DNA polymerase-primase complex) consisting of four subunits: the catalytic subunit POLA1, the regulatory subunit POLA2, and primase complex subunits PRIM1 and PRIM2 respectively. Within the complex, POLA1 directly interacts with PRIM2/p58. Post-translationally, phosphorylated in a cell cycle-dependent manner, in G2/M phase.

Its subcellular location is the nucleus. Functionally, accessory subunit of the DNA polymerase alpha complex (also known as the alpha DNA polymerase-primase complex) which plays an essential role in the initiation of DNA synthesis. During the S phase of the cell cycle, the DNA polymerase alpha complex (composed of a catalytic subunit POLA1, an accessory subunit POLA2 and two primase subunits, the catalytic subunit PRIM1 and the regulatory subunit PRIM2) is recruited to DNA at the replicative forks via direct interactions with MCM10 and WDHD1. The primase subunit of the polymerase alpha complex initiates DNA synthesis by oligomerising short RNA primers on both leading and lagging strands. These primers are initially extended by the polymerase alpha catalytic subunit and subsequently transferred to polymerase delta and polymerase epsilon for processive synthesis on the lagging and leading strand, respectively. The sequence is that of DNA polymerase alpha subunit B (POLA2) from Homo sapiens (Human).